The following is a 433-amino-acid chain: Trigger factor (433 aa).

The PPIase FKBP-type domain occupies 161–246 (EDRATIDFTG…LKKVEERELP (86 aa)).

Belongs to the FKBP-type PPIase family. Tig subfamily.

It is found in the cytoplasm. The catalysed reaction is [protein]-peptidylproline (omega=180) = [protein]-peptidylproline (omega=0). Involved in protein export. Acts as a chaperone by maintaining the newly synthesized protein in an open conformation. Functions as a peptidyl-prolyl cis-trans isomerase. The polypeptide is Trigger factor (Edwardsiella ictaluri (strain 93-146)).